Consider the following 166-residue polypeptide: Protein-export protein SecB (166 aa).

Belongs to the SecB family. In terms of assembly, homotetramer, a dimer of dimers. One homotetramer interacts with 1 SecA dimer.

The protein resides in the cytoplasm. One of the proteins required for the normal export of preproteins out of the cell cytoplasm. It is a molecular chaperone that binds to a subset of precursor proteins, maintaining them in a translocation-competent state. It also specifically binds to its receptor SecA. This chain is Protein-export protein SecB, found in Cereibacter sphaeroides (strain ATCC 17025 / ATH 2.4.3) (Rhodobacter sphaeroides).